A 632-amino-acid chain; its full sequence is Chaperone protein HtpG (632 aa).

The tract at residues 1-339 (MAHETMSFQA…SADLPLNVSR (339 aa)) is a; substrate-binding. The b stretch occupies residues 340-559 (EILQESRDVK…DNDMSGYLQR (220 aa)). The c stretch occupies residues 560–632 (MLKAAGQNAP…TNALLLSRAA (73 aa)).

Belongs to the heat shock protein 90 family. Homodimer.

It is found in the cytoplasm. In terms of biological role, molecular chaperone. Has ATPase activity. The chain is Chaperone protein HtpG from Burkholderia ambifaria (strain ATCC BAA-244 / DSM 16087 / CCUG 44356 / LMG 19182 / AMMD) (Burkholderia cepacia (strain AMMD)).